Here is a 448-residue protein sequence, read N- to C-terminus: Protein kinase C and casein kinase substrate in neurons protein 2 (448 aa).

In terms of domain architecture, F-BAR spans valine 11–aspartate 282. Positions lysine 25–isoleucine 274 form a coiled coil. A disordered region spans residues serine 315 to serine 386. The segment covering threonine 329 to threonine 358 has biased composition (polar residues). The NPF1 motif lies at asparagine 367 to phenylalanine 369. Residues asparagine 379–phenylalanine 381 carry the NPF2 motif. In terms of domain architecture, SH3 spans valine 388–glutamine 448.

The protein belongs to the PACSIN family. Post-translationally, phosphorylated on serine residues. As to expression, detected in intestine, cardiac muscle, lung and brain (at protein level). Expressed in all tissues tested, including, gizzard, liver, cardiac muscle, skeletal muscle and skin.

It is found in the cytoplasm. It localises to the cytoskeleton. The protein localises to the cytoplasmic vesicle membrane. Its subcellular location is the cell projection. The protein resides in the ruffle membrane. It is found in the early endosome. It localises to the recycling endosome membrane. The protein localises to the cell membrane. Its subcellular location is the membrane. The protein resides in the caveola. It is found in the cell junction. It localises to the focal adhesion. Functionally, regulates the morphogenesis and endocytosis of caveolae. Lipid-binding protein that is able to promote the tubulation of the phosphatidic acid-containing membranes it preferentially binds. Plays a role in intracellular vesicle-mediated transport. Involved in the endocytosis of cell-surface receptors like the EGF receptor, contributing to its internalization in the absence of EGF stimulus. Essential for endothelial organization in sprouting angiogenesis, modulates CDH5-based junctions. Facilitates endothelial front-rear polarity during migration by recruiting EHD4 and MICALL1 to asymmetric adherens junctions between leader and follower cells. The sequence is that of Protein kinase C and casein kinase substrate in neurons protein 2 (PACSIN2) from Gallus gallus (Chicken).